A 689-amino-acid polypeptide reads, in one-letter code: Elongation factor G (689 aa).

Residues 8–282 enclose the tr-type G domain; that stretch reads DKVRNIGIMA…AIVRYLPSPL (275 aa). GTP is bound by residues 17-24, 81-85, and 135-138; these read AHIDAGKT, DTPGH, and NKMD.

It belongs to the TRAFAC class translation factor GTPase superfamily. Classic translation factor GTPase family. EF-G/EF-2 subfamily.

It is found in the cytoplasm. Functionally, catalyzes the GTP-dependent ribosomal translocation step during translation elongation. During this step, the ribosome changes from the pre-translocational (PRE) to the post-translocational (POST) state as the newly formed A-site-bound peptidyl-tRNA and P-site-bound deacylated tRNA move to the P and E sites, respectively. Catalyzes the coordinated movement of the two tRNA molecules, the mRNA and conformational changes in the ribosome. The chain is Elongation factor G from Thermoanaerobacter pseudethanolicus (strain ATCC 33223 / 39E) (Clostridium thermohydrosulfuricum).